The primary structure comprises 84 residues: MANPFRAEVKQLYKALLFLGREYPKGADYFRERLRAAFAKNKDMRDPDKIKQLISRGEFVVKELEALYYLRKYRALKKRYYEAE.

This sequence belongs to the complex I LYR family.

The sequence is that of LYR motif-containing protein 5B (lyrm5b) from Danio rerio (Zebrafish).